Reading from the N-terminus, the 107-residue chain is Phosphoribosyl-ATP pyrophosphatase (107 aa).

This sequence belongs to the PRA-PH family.

The protein localises to the cytoplasm. It catalyses the reaction 1-(5-phospho-beta-D-ribosyl)-ATP + H2O = 1-(5-phospho-beta-D-ribosyl)-5'-AMP + diphosphate + H(+). The protein operates within amino-acid biosynthesis; L-histidine biosynthesis; L-histidine from 5-phospho-alpha-D-ribose 1-diphosphate: step 2/9. The chain is Phosphoribosyl-ATP pyrophosphatase from Bacillus thuringiensis (strain Al Hakam).